The chain runs to 746 residues: Mediator of RNA polymerase II transcription subunit 25 (746 aa).

The interval Met-1–Leu-226 is interaction with the Mediator complex. Disordered stretches follow at residues Gly-233 to Gln-273 and Gly-298 to Gly-390. A compositionally biased stretch (pro residues) spans Pro-238 to Ala-251. Over residues Pro-252–Gln-262 the composition is skewed to low complexity. Positions Pro-329–Ser-342 are enriched in pro residues. A compositionally biased stretch (low complexity) spans Gln-343–Pro-354. The tract at residues Leu-389–Asn-543 is interaction with VP16. The interaction with CREBBP stretch occupies residues Val-395 to Lys-545. The disordered stretch occupies residues Gln-548 to Ile-746. Interaction with RARA regions lie at residues Ala-563–Pro-652 and Pro-639–Gln-706. Residues Ala-599–Ala-610 are compositionally biased toward low complexity. The span at Pro-611–Leu-633 shows a compositional bias: pro residues. The short motif at Leu-645–Leu-649 is the LXXLL motif element. 3 stretches are compositionally biased toward pro residues: residues Asn-651–Gln-663, Pro-672–His-682, and Leu-690–Gln-701. Arg-724 carries the post-translational modification Asymmetric dimethylarginine. Over residues Met-737 to Ile-746 the composition is skewed to acidic residues.

This sequence belongs to the Mediator complex subunit 25 family. In terms of assembly, component of the Mediator complex, which is composed of MED1, MED4, MED6, MED7, MED8, MED9, MED10, MED11, MED12, MED13, MED13L, MED14, MED15, MED16, MED17, MED18, MED19, MED20, MED21, MED22, MED23, MED24, MED25, MED26, MED27, MED29, MED30, MED31, CCNC, CDK8 and CDC2L6/CDK11. The MED12, MED13, CCNC and CDK8 subunits form a distinct module termed the CDK8 module. Mediator containing the CDK8 module is less active than Mediator lacking this module in supporting transcriptional activation. Individual preparations of the Mediator complex lacking one or more distinct subunits have been variously termed ARC, CRSP, DRIP, PC2, SMCC and TRAP. Interacts with CREBBP. Interacts with ESR1, GR, RARA, RXRA and THRB in a ligand-dependent fashion. Binds the Herpes simplex virus activator VP16.

The protein localises to the nucleus. In terms of biological role, component of the Mediator complex, a coactivator involved in the regulated transcription of nearly all RNA polymerase II-dependent genes. Mediator functions as a bridge to convey information from gene-specific regulatory proteins to the basal RNA polymerase II transcription machinery. Mediator is recruited to promoters by direct interactions with regulatory proteins and serves as a scaffold for the assembly of a functional preinitiation complex with RNA polymerase II and the general transcription factors. Required for RARA/RXRA-mediated transcription. The chain is Mediator of RNA polymerase II transcription subunit 25 (MED25) from Bos taurus (Bovine).